The primary structure comprises 117 residues: Large ribosomal subunit protein uL24 (117 aa).

Basic residues predominate over residues 1 to 10 (MSKQPRKQRK). The tract at residues 1–28 (MSKQPRKQRKALYTAPLHKRHNSMSVHL) is disordered.

It belongs to the universal ribosomal protein uL24 family. Part of the 50S ribosomal subunit.

One of two assembly initiator proteins, it binds directly to the 5'-end of the 23S rRNA, where it nucleates assembly of the 50S subunit. Its function is as follows. Located at the polypeptide exit tunnel on the outside of the subunit. In Methanosphaera stadtmanae (strain ATCC 43021 / DSM 3091 / JCM 11832 / MCB-3), this protein is Large ribosomal subunit protein uL24.